A 200-amino-acid polypeptide reads, in one-letter code: NADH-quinone oxidoreductase subunit C (200 aa).

It belongs to the complex I 30 kDa subunit family. NDH-1 is composed of 14 different subunits. Subunits NuoB, C, D, E, F, and G constitute the peripheral sector of the complex.

Its subcellular location is the cell inner membrane. It catalyses the reaction a quinone + NADH + 5 H(+)(in) = a quinol + NAD(+) + 4 H(+)(out). Functionally, NDH-1 shuttles electrons from NADH, via FMN and iron-sulfur (Fe-S) centers, to quinones in the respiratory chain. The immediate electron acceptor for the enzyme in this species is believed to be ubiquinone. Couples the redox reaction to proton translocation (for every two electrons transferred, four hydrogen ions are translocated across the cytoplasmic membrane), and thus conserves the redox energy in a proton gradient. The polypeptide is NADH-quinone oxidoreductase subunit C (Burkholderia ambifaria (strain ATCC BAA-244 / DSM 16087 / CCUG 44356 / LMG 19182 / AMMD) (Burkholderia cepacia (strain AMMD))).